A 352-amino-acid polypeptide reads, in one-letter code: Chorismate synthase (352 aa).

Arg-48 serves as a coordination point for NADP(+). FMN is bound by residues 125–127, 238–239, Gly-278, 293–297, and Arg-319; these read RSS, NA, and KPTSS.

Belongs to the chorismate synthase family. In terms of assembly, homotetramer. Requires FMNH2 as cofactor.

It carries out the reaction 5-O-(1-carboxyvinyl)-3-phosphoshikimate = chorismate + phosphate. It participates in metabolic intermediate biosynthesis; chorismate biosynthesis; chorismate from D-erythrose 4-phosphate and phosphoenolpyruvate: step 7/7. In terms of biological role, catalyzes the anti-1,4-elimination of the C-3 phosphate and the C-6 proR hydrogen from 5-enolpyruvylshikimate-3-phosphate (EPSP) to yield chorismate, which is the branch point compound that serves as the starting substrate for the three terminal pathways of aromatic amino acid biosynthesis. This reaction introduces a second double bond into the aromatic ring system. This Legionella pneumophila (strain Lens) protein is Chorismate synthase.